The following is a 284-amino-acid chain: tRNA uridine(34) hydroxylase (284 aa).

The Rhodanese domain occupies 132–226 (TGRPVVMLDT…YFEEVGGAHY (95 aa)). Cys-186 (cysteine persulfide intermediate) is an active-site residue.

This sequence belongs to the TrhO family.

The catalysed reaction is uridine(34) in tRNA + AH2 + O2 = 5-hydroxyuridine(34) in tRNA + A + H2O. Its function is as follows. Catalyzes oxygen-dependent 5-hydroxyuridine (ho5U) modification at position 34 in tRNAs. This chain is tRNA uridine(34) hydroxylase, found in Burkholderia lata (strain ATCC 17760 / DSM 23089 / LMG 22485 / NCIMB 9086 / R18194 / 383).